The chain runs to 624 residues: MLSRVARCSRTLNQVTRNGQSGLFSAVLRTSIRQNSTDSPASNNANEIYTKLSDTKDPQRNQFFQYTWGSWLTNDKSKKKQRETTFSIEGLTLFIDRINQLESKLAQPKSLEGAFVLANNKELLGSTKDKVIVRSIASIHEGKHHRVYKITLNTGKELVLRIPYKLDSDVAIASKLKSEVATTDFLKLKLGLNVPRVLAYGVDSNNEIKSPFILQEFISGELLMKKWHPLLPDSEETNKCLHEVIDPIAQFQNKILSVTFNKFGSLYFHDDVEGSLQNDVPYEGETDSALSNRWRIGPSVERQFTRNKNKLQQSIIDQYNGPWDASNPTAVLESVADIELENAKSKLSLINADAGANENDRALITKQIKTFENLKKISPQLINDKSKSIMNVEVLFKPRLYIPDLDPLNVIQHSDTENYFIDFEGSTIKPFILTSYPKFVAYQGAKIYNLEEDVPGYKEMEELEKQQYEFMYYKTRNERMWEFELNKYRHDLIAIASPHIKVLKSPYLQALDVKNGKDYLYVEGSIVQLQAMWEAYVANELVNSKDTKFPIEYTAEYLDQHQQELSDYQLETVSSPFSATGGWIPQDMFDTLKAQGILVETKDGNYKVETEKVLENPPAQPEEK.

The N-terminal 34 residues, 1–34 (MLSRVARCSRTLNQVTRNGQSGLFSAVLRTSIRQ), are a transit peptide targeting the mitochondrion.

It belongs to the AIM9 family.

The protein resides in the mitochondrion. This Candida albicans (strain WO-1) (Yeast) protein is Altered inheritance of mitochondria protein 9, mitochondrial (AIM9).